The primary structure comprises 327 residues: MDLYPEEKTQSKQSHNSENNMQIFKSENSDGFSSDLMISNDQLKNISKTQLTLEKEKIFKMPNVLSQVMKKAFSRKNEILYCVSTKELSVDIHDATGKVYLPLITKEEINKRLSSLKPEVRKTMSMVHLGAVKILLKAQFRNGIDTPIKIALIDDRINSRRDCLLGAAKGNLAYGKFMFTVYPKFGISLNTQRLNQTLSLIHDFENKNLMNKGDKVMTITYIVGYALTNSHHSIDYQSNATIELEDVFQEIGNVQQCDFCTIQNDECNWAIDIAQNKALLGAKTQSQIGNSLQIGNSASSSNTENELARVSQNIDLLKNKLKEICGE.

Residues 297–327 (SASSSNTENELARVSQNIDLLKNKLKEICGE) adopt a coiled-coil conformation.

The protein belongs to the caulimoviridae movement protein family. As to quaternary structure, homotrimer, through the coiled-coil domain. Interacts with VAP. May interact (via N-terminus) with host prenylated Rab acceptor protein 1D (PRA1D).

The protein localises to the host cell junction. It localises to the host plasmodesma. Transports viral genome to neighboring plant cells directly through plasmosdesmata, without any budding. The movement protein allows efficient cell to cell propagation, by bypassing the host cell wall barrier. Acts by forming tubules structures that increase the size exclusion limit (SEL) of plasmodesmata, thereby allowing viral ribonucleocapsids to spread directly to neighboring cells. The polypeptide is Movement protein (Arabidopsis thaliana (Mouse-ear cress)).